The sequence spans 158 residues: Large ribosomal subunit protein bL19 (158 aa).

The segment covering 119–129 has biased composition (basic and acidic residues); sequence SDRSRVMKDAA. The tract at residues 119-158 is disordered; sequence SDRSRVMKDAARAQQARDAAQGNSSSETQSSTAAVETQGE. A compositionally biased stretch (low complexity) spans 130–139; the sequence is RAQQARDAAQ. Positions 140–158 are enriched in polar residues; sequence GNSSSETQSSTAAVETQGE.

This sequence belongs to the bacterial ribosomal protein bL19 family.

In terms of biological role, this protein is located at the 30S-50S ribosomal subunit interface and may play a role in the structure and function of the aminoacyl-tRNA binding site. The polypeptide is Large ribosomal subunit protein bL19 (Deinococcus geothermalis (strain DSM 11300 / CIP 105573 / AG-3a)).